A 71-amino-acid polypeptide reads, in one-letter code: DNA-directed RNA polymerase subunit epsilon (71 aa).

It belongs to the RNA polymerase subunit epsilon family. RNAP is composed of a core of 2 alpha, a beta and a beta' subunit. The core is associated with a delta subunit, and at least one of epsilon or omega. When a sigma factor is associated with the core the holoenzyme is formed, which can initiate transcription.

The catalysed reaction is RNA(n) + a ribonucleoside 5'-triphosphate = RNA(n+1) + diphosphate. A non-essential component of RNA polymerase (RNAP). This Geobacillus kaustophilus (strain HTA426) protein is DNA-directed RNA polymerase subunit epsilon.